The chain runs to 947 residues: Translation initiation factor IF-2 (947 aa).

Residues 69 to 353 (RRRKEVPQEE…TPKPQKKTEV (285 aa)) are disordered. Low complexity predominate over residues 81–108 (APPAAAEEPSSVDTAVAEEAPAEEVQPV). The span at 139–155 (PVVEEVIAEPAVEEVVE) shows a compositional bias: acidic residues. 2 stretches are compositionally biased toward basic and acidic residues: residues 215–226 (VTKEKPKVEKAT) and 246–262 (KRQERAKNGKGRPERPK). Low complexity predominate over residues 264–284 (AKPSGGPAPRAKEAAPQAAVP). A compositionally biased stretch (basic and acidic residues) spans 327–337 (QVYEPERDERR). Residues 338–348 (MRRGKKTPKPQ) show a composition bias toward basic residues. Residues 447 to 616 (PRPPVVTIMG…LLQAEVLELK (170 aa)) enclose the tr-type G domain. Residues 456 to 463 (GHVDHGKT) form a G1 region. 456 to 463 (GHVDHGKT) provides a ligand contact to GTP. Residues 481-485 (GITQH) are G2. Positions 502-505 (DTPG) are G3. GTP is bound by residues 502–506 (DTPGH) and 556–559 (NKMD). The G4 stretch occupies residues 556-559 (NKMD). The segment at 592 to 594 (SAK) is G5.

The protein belongs to the TRAFAC class translation factor GTPase superfamily. Classic translation factor GTPase family. IF-2 subfamily.

The protein resides in the cytoplasm. Its function is as follows. One of the essential components for the initiation of protein synthesis. Protects formylmethionyl-tRNA from spontaneous hydrolysis and promotes its binding to the 30S ribosomal subunits. Also involved in the hydrolysis of GTP during the formation of the 70S ribosomal complex. This is Translation initiation factor IF-2 from Syntrophotalea carbinolica (strain DSM 2380 / NBRC 103641 / GraBd1) (Pelobacter carbinolicus).